The sequence spans 588 residues: Transcriptional regulatory protein ASH1 (588 aa).

Phosphoserine is present on Ser56. 3 disordered regions span residues 85-109 (SNTAPASPHHMDYNPISSLTPGNSP), 377-398 (SNNSKSNVRKPSKNKISKQASN), and 417-495 (SSVS…TRHT). A compositionally biased stretch (polar residues) spans 99 to 109 (PISSLTPGNSP). The segment covering 383–392 (NVRKPSKNKI) has biased composition (basic residues). Positions 417–433 (SSVSASSSPSPSTPTKS) are enriched in low complexity. Ser465 is modified (phosphoserine). Residues 470–493 (PRRSSNSSITKKGSRRSSGSSPTR) show a composition bias toward low complexity. The segment at 499–526 (CVSCHSSDSPCWRPSWSPRKQDQLCNSC) adopts a GATA-type; atypical zinc-finger fold.

As to quaternary structure, component of the RPD3C(L) complex composed of at least ASH1, CTI6, DEP1, PHO23, RPD3, RXT2, RXT3, SAP30, SDS3, SIN3, UME1 and UME6.

The protein resides in the nucleus. In terms of biological role, component of the RPD3C(L) histone deacetylase complex (HDAC). Responsible for the deacetylation of lysine residues on the N-terminal part of the core histones (H2A, H2B, H3 and H4). Histone deacetylation gives a tag for epigenetic repression and plays an important role in transcriptional regulation, cell cycle progression and developmental events. ASH1 is necessary to repress HO in daughter cells to block mating-type switching through its binding to HO promoter 5'-YTGAT-3' sites. Also involved in pseudohyphal growth. The protein is Transcriptional regulatory protein ASH1 (ASH1) of Saccharomyces cerevisiae (strain ATCC 204508 / S288c) (Baker's yeast).